Consider the following 406-residue polypeptide: Putative cfxQ-like protein R730 (406 aa).

The tract at residues 1-37 is disordered; it reads MKRSHDSITRSINSDNDSETNMNSDNNNNNKPNQRKK. A compositionally biased stretch (low complexity) spans 13–32; that stretch reads NSDNDSETNMNSDNNNNNKP. 173-180 is a binding site for ATP; that stretch reads GPPGVGKS.

Belongs to the CbxX/CfxQ family.

This is Putative cfxQ-like protein R730 from Acanthamoeba polyphaga mimivirus (APMV).